A 311-amino-acid chain; its full sequence is Ornithine carbamoyltransferase (311 aa).

Carbamoyl phosphate contacts are provided by residues 56–59 (STRT), Q83, R107, and 134–137 (HPTQ). L-ornithine is bound by residues N166, D230, and 234–235 (SM). Carbamoyl phosphate-binding positions include 270 to 271 (CL) and K298.

It belongs to the aspartate/ornithine carbamoyltransferase superfamily. OTCase family.

It localises to the cytoplasm. The catalysed reaction is carbamoyl phosphate + L-ornithine = L-citrulline + phosphate + H(+). Its pathway is amino-acid degradation; L-arginine degradation via ADI pathway; carbamoyl phosphate from L-arginine: step 2/2. Its function is as follows. Reversibly catalyzes the transfer of the carbamoyl group from carbamoyl phosphate (CP) to the N(epsilon) atom of ornithine (ORN) to produce L-citrulline. This Ignicoccus hospitalis (strain KIN4/I / DSM 18386 / JCM 14125) protein is Ornithine carbamoyltransferase.